The chain runs to 119 residues: NLVQFSYLIQCANHGRRPTRHYMDYGCYCGWGGSGTPVDELDRCCKIHDDCYSDAEKKGCSPKMSAYDYYCGENGPYCRNIKKKCLRFVCDCDVEAAFCFAKAPYNNANWNIDTKKRCQ.

7 cysteine pairs are disulfide-bonded: Cys11–Cys71, Cys27–Cys118, Cys29–Cys45, Cys44–Cys99, Cys51–Cys92, Cys60–Cys85, and Cys78–Cys90. Residues Tyr28, Gly30, and Gly32 each contribute to the Ca(2+) site. His48 is an active-site residue. Asp49 provides a ligand contact to Ca(2+). Asp93 is an active-site residue.

The protein belongs to the phospholipase A2 family. Group I subfamily. D49 sub-subfamily. Ca(2+) is required as a cofactor. As to expression, expressed by the venom gland.

The protein resides in the secreted. The enzyme catalyses a 1,2-diacyl-sn-glycero-3-phosphocholine + H2O = a 1-acyl-sn-glycero-3-phosphocholine + a fatty acid + H(+). Functionally, snake venom phospholipase A2 (PLA2) that inhibits neuromuscular transmission by blocking acetylcholine release from the nerve termini. Notechis II-5 is less toxic than notexin but has a higher specific phospholipase activity. PLA2 catalyzes the calcium-dependent hydrolysis of the 2-acyl groups in 3-sn-phosphoglycerides. The polypeptide is Basic phospholipase A2 notechis II-5 (Notechis scutatus scutatus (Mainland tiger snake)).